A 338-amino-acid polypeptide reads, in one-letter code: Nicotinate-nucleotide--dimethylbenzimidazole phosphoribosyltransferase (338 aa).

Glutamate 305 functions as the Proton acceptor in the catalytic mechanism.

It belongs to the CobT family.

It carries out the reaction 5,6-dimethylbenzimidazole + nicotinate beta-D-ribonucleotide = alpha-ribazole 5'-phosphate + nicotinate + H(+). It functions in the pathway nucleoside biosynthesis; alpha-ribazole biosynthesis; alpha-ribazole from 5,6-dimethylbenzimidazole: step 1/2. Catalyzes the synthesis of alpha-ribazole-5'-phosphate from nicotinate mononucleotide (NAMN) and 5,6-dimethylbenzimidazole (DMB). The chain is Nicotinate-nucleotide--dimethylbenzimidazole phosphoribosyltransferase from Rhizobium etli (strain CIAT 652).